The sequence spans 138 residues: Eukaryotic translation initiation factor 1A (138 aa).

Residues 1–15 show a composition bias toward basic residues; sequence MPKNKGKGGKNRRRG. A disordered region spans residues 1 to 28; that stretch reads MPKNKGKGGKNRRRGKNENENEKRELTY. The segment covering 16 to 27 has biased composition (basic and acidic residues); it reads KNENENEKRELT. Residues 22-96 form the S1-like domain; that stretch reads EKRELTYAEE…EKGDVILKYT (75 aa).

It belongs to the eIF-1A family.

In terms of biological role, seems to be required for maximal rate of protein biosynthesis. Enhances ribosome dissociation into subunits and stabilizes the binding of the initiator Met-tRNA(I) to 40 S ribosomal subunits. This chain is Eukaryotic translation initiation factor 1A (tif11), found in Schizosaccharomyces pombe (strain 972 / ATCC 24843) (Fission yeast).